The chain runs to 725 residues: Protein ALEX (725 aa).

7 disordered regions span residues 1–93, 177–226, 256–340, 396–481, 508–528, 584–624, and 638–675; these read MSPS…ARAQ, GAIA…PLTD, EPPL…PSQP, PILT…SPLL, PMQV…PLGH, LPGL…AASS, and ATRS…GRPR. Residues 41–51 show a composition bias toward basic residues; sequence HLRRKPCHSRH. Positions 260–276 are enriched in polar residues; the sequence is GSTTTPLSIWTAPQSQV. 2 stretches are compositionally biased toward basic and acidic residues: residues 297-307 and 314-326; these read QLSEKQPRWKE and RWKE…REGT. 2 stretches are compositionally biased toward pro residues: residues 423–442 and 459–473; these read PSQP…PGQP and RSLP…PRSP. 2 stretches are compositionally biased toward low complexity: residues 584–598 and 643–658; these read LPGL…AAAG and ATQS…EAAS.

Belongs to the ALEX family. In terms of assembly, interacts with the N-terminal region of the XLas isoforms of guanine nucleotide-binding protein G(s) subunit alpha.

Its subcellular location is the cell membrane. It is found in the cell projection. The protein resides in the ruffle. In terms of biological role, may inhibit the adenylyl cyclase-stimulating activity of guanine nucleotide-binding protein G(s) subunit alpha which is produced from the same locus in a different open reading frame. This is Protein ALEX from Mus musculus (Mouse).